The primary structure comprises 823 residues: DNA ligase (823 aa).

Residues 31–35 (DDAFD) and 73–74 (SQ) contribute to the NAD(+) site. K100 functions as the N6-AMP-lysine intermediate in the catalytic mechanism. Positions 121, 163, 275, and 296 each coordinate NAD(+). Zn(2+)-binding residues include C387, C390, C403, and C408. 3 BRCT domains span residues 562–655 (QAES…TGET), 654–742 (ETVH…DAHV), and 741–823 (HVHA…TPGT).

Belongs to the NAD-dependent DNA ligase family. LigA subfamily. It depends on Mg(2+) as a cofactor. The cofactor is Mn(2+).

The catalysed reaction is NAD(+) + (deoxyribonucleotide)n-3'-hydroxyl + 5'-phospho-(deoxyribonucleotide)m = (deoxyribonucleotide)n+m + AMP + beta-nicotinamide D-nucleotide.. Functionally, DNA ligase that catalyzes the formation of phosphodiester linkages between 5'-phosphoryl and 3'-hydroxyl groups in double-stranded DNA using NAD as a coenzyme and as the energy source for the reaction. It is essential for DNA replication and repair of damaged DNA. This is DNA ligase from Treponema pallidum (strain Nichols).